We begin with the raw amino-acid sequence, 273 residues long: Formamidopyrimidine-DNA glycosylase (273 aa).

The active-site Schiff-base intermediate with DNA is P2. E3 acts as the Proton donor in catalysis. Residue K59 is the Proton donor; for beta-elimination activity of the active site. DNA-binding residues include H92 and R111. An FPG-type zinc finger spans residues 239–273; the sequence is KVYGKTDEPCVVCGKPIEKIKLNGRGTHFCPNCQK. Catalysis depends on R263, which acts as the Proton donor; for delta-elimination activity.

It belongs to the FPG family. Monomer. It depends on Zn(2+) as a cofactor.

The enzyme catalyses Hydrolysis of DNA containing ring-opened 7-methylguanine residues, releasing 2,6-diamino-4-hydroxy-5-(N-methyl)formamidopyrimidine.. The catalysed reaction is 2'-deoxyribonucleotide-(2'-deoxyribose 5'-phosphate)-2'-deoxyribonucleotide-DNA = a 3'-end 2'-deoxyribonucleotide-(2,3-dehydro-2,3-deoxyribose 5'-phosphate)-DNA + a 5'-end 5'-phospho-2'-deoxyribonucleoside-DNA + H(+). Functionally, involved in base excision repair of DNA damaged by oxidation or by mutagenic agents. Acts as a DNA glycosylase that recognizes and removes damaged bases. Has a preference for oxidized purines, such as 7,8-dihydro-8-oxoguanine (8-oxoG). Has AP (apurinic/apyrimidinic) lyase activity and introduces nicks in the DNA strand. Cleaves the DNA backbone by beta-delta elimination to generate a single-strand break at the site of the removed base with both 3'- and 5'-phosphates. The chain is Formamidopyrimidine-DNA glycosylase from Listeria monocytogenes serotype 4b (strain F2365).